The sequence spans 432 residues: MPNVVVVGAQWGDEGKGRVVDWLAAQADLVARYNGGHNAGHTLVVGGKTYKLALLPSGVVRGKRGVIGNGVALDPEALLAEIGRMAELGLSVTPDNLSIAENATLVLPIHRAIDQAQERLRREPIGTTLRGIGPAYEDKVGRRGLRVGDLAEPGRLAAKLDVLVDHHNAWFRGLGLDEYSRDAMLATLVDLAPRILPFVRPVWADLNDATDRGERILFEGSQAVMLDIDWGTYPFVTSSGTVASAAAAGTGLGASKLGHVLGVTKAYATRVGGGPFLTELSDATGETLRARGQEFGVNTGRPRRCGWLDAAQLRQAVRISGIDSLALTKLDVLDGFESIELCVGYEFDGARVDHLPASLDAQSRAKPVYERFDGWRGTVKGVRERAALPRAAQDFIARVEAVAGAPVSMITTGAERDDTIVLRNPFDAAAGA.

Residues 12–18 and 40–42 each bind GTP; these read GDEGKGR and GHT. Asp-13 serves as the catalytic Proton acceptor. Residues Asp-13 and Gly-40 each contribute to the Mg(2+) site. Residues 13-16, 38-41, Thr-128, Arg-142, Gln-222, Thr-237, and Arg-301 each bind IMP; these read DEGK and NAGH. His-41 serves as the catalytic Proton donor. Substrate is bound at residue 297–303; sequence VNTGRPR. GTP-binding positions include Arg-303, 329–331, and 411–413; these read KLD and TTG.

The protein belongs to the adenylosuccinate synthetase family. Homodimer. The cofactor is Mg(2+).

The protein resides in the cytoplasm. The enzyme catalyses IMP + L-aspartate + GTP = N(6)-(1,2-dicarboxyethyl)-AMP + GDP + phosphate + 2 H(+). The protein operates within purine metabolism; AMP biosynthesis via de novo pathway; AMP from IMP: step 1/2. Plays an important role in the de novo pathway of purine nucleotide biosynthesis. Catalyzes the first committed step in the biosynthesis of AMP from IMP. This Burkholderia lata (strain ATCC 17760 / DSM 23089 / LMG 22485 / NCIMB 9086 / R18194 / 383) protein is Adenylosuccinate synthetase 2.